A 560-amino-acid chain; its full sequence is Formate--tetrahydrofolate ligase (560 aa).

70 to 77 (TPAGEGKT) serves as a coordination point for ATP.

It belongs to the formate--tetrahydrofolate ligase family.

It carries out the reaction (6S)-5,6,7,8-tetrahydrofolate + formate + ATP = (6R)-10-formyltetrahydrofolate + ADP + phosphate. Its pathway is one-carbon metabolism; tetrahydrofolate interconversion. This chain is Formate--tetrahydrofolate ligase, found in Methanocorpusculum labreanum (strain ATCC 43576 / DSM 4855 / Z).